The chain runs to 155 residues: Transcriptional repressor NrdR (155 aa).

A zinc finger lies at Cys-3 to Cys-34. Residues Pro-49–Ala-139 form the ATP-cone domain.

Belongs to the NrdR family. Zn(2+) is required as a cofactor.

In terms of biological role, negatively regulates transcription of bacterial ribonucleotide reductase nrd genes and operons by binding to NrdR-boxes. This is Transcriptional repressor NrdR from Halorhodospira halophila (strain DSM 244 / SL1) (Ectothiorhodospira halophila (strain DSM 244 / SL1)).